Consider the following 508-residue polypeptide: Cytochrome P450 4A12B (508 aa).

The first 37 residues, 1–37 (MSASALSSIRFPGSISEYLQVASVLSLLLLLFKTAQL), serve as a signal peptide directing secretion. 2 residues coordinate heme: glutamate 319 and cysteine 455.

It belongs to the cytochrome P450 family. Requires heme as cofactor. In terms of tissue distribution, expressed in lung, but almost undetectable in the kidneys of five different strains.

It localises to the endoplasmic reticulum membrane. The protein resides in the microsome membrane. The catalysed reaction is an organic molecule + reduced [NADPH--hemoprotein reductase] + O2 = an alcohol + oxidized [NADPH--hemoprotein reductase] + H2O + H(+). It carries out the reaction dodecanoate + reduced [NADPH--hemoprotein reductase] + O2 = 11-hydroxydodecanoate + oxidized [NADPH--hemoprotein reductase] + H2O + H(+). The enzyme catalyses dodecanoate + reduced [NADPH--hemoprotein reductase] + O2 = 12-hydroxydodecanoate + oxidized [NADPH--hemoprotein reductase] + H2O + H(+). It catalyses the reaction (5Z,8Z,11Z,14Z)-eicosatetraenoate + reduced [NADPH--hemoprotein reductase] + O2 = 18-hydroxy-(5Z,8Z,11Z,14Z)-eicosatetraenoate + oxidized [NADPH--hemoprotein reductase] + H2O + H(+). The catalysed reaction is (5Z,8Z,11Z,14Z)-eicosatetraenoate + reduced [NADPH--hemoprotein reductase] + O2 = 19-hydroxy-(5Z,8Z,11Z,14Z)-eicosatetraenoate + oxidized [NADPH--hemoprotein reductase] + H2O + H(+). It carries out the reaction (5Z,8Z,11Z,14Z)-eicosatetraenoate + reduced [NADPH--hemoprotein reductase] + O2 = 20-hydroxy-(5Z,8Z,11Z,14Z)-eicosatetraenoate + oxidized [NADPH--hemoprotein reductase] + H2O + H(+). The enzyme catalyses (5Z,8Z,11Z,14Z,17Z)-eicosapentaenoate + reduced [NADPH--hemoprotein reductase] + O2 = 19-hydroxy-(5Z,8Z,11Z,14Z,17Z)-eicosapentaenoate + oxidized [NADPH--hemoprotein reductase] + H2O + H(+). It catalyses the reaction (5Z,8Z,11Z,14Z,17Z)-eicosapentaenoate + reduced [NADPH--hemoprotein reductase] + O2 = 20-hydroxy-(5Z,8Z,11Z,14Z,17Z)-eicosapentaenoate + oxidized [NADPH--hemoprotein reductase] + H2O + H(+). The catalysed reaction is (5Z,8Z,11Z,14Z,17Z)-eicosapentaenoate + reduced [NADPH--hemoprotein reductase] + O2 = (17S,18R)-epoxy-(5Z,8Z,11Z,14Z)-eicosatetraenoate + oxidized [NADPH--hemoprotein reductase] + H2O + H(+). It carries out the reaction (5Z,8Z,11Z,14Z,17Z)-eicosapentaenoate + reduced [NADPH--hemoprotein reductase] + O2 = (17R,18S)-epoxy-(5Z,8Z,11Z,14Z)-eicosatetraenoate + oxidized [NADPH--hemoprotein reductase] + H2O + H(+). The protein operates within lipid metabolism; fatty acid metabolism. Activated by cytochrome b5. The Vmax almost doubles in the presence of cytochrome b5. Functionally, a cytochrome P450 monooxygenase involved in the metabolism of fatty acids and their oxygenated derivatives (oxylipins). Mechanistically, uses molecular oxygen inserting one oxygen atom into a substrate, and reducing the second into a water molecule, with two electrons provided by NADPH via cytochrome P450 reductase (CPR; NADPH-ferrihemoprotein reductase). Catalyzes predominantly the oxidation of the terminal carbon (omega-oxidation) of saturated and unsaturated fatty acids. May act as a major omega-hydroxylase for dodecanoic (lauric) acid in kidney. Participates in omega-hydroxylation of (5Z,8Z,11Z,14Z)-eicosatetraenoic acid (arachidonate) to 20-hydroxyeicosatetraenoic acid (20-HETE), a signaling molecule acting both as vasoconstrictive and natriuretic with overall effect on arterial blood pressure. Acts as an omega-hydroxylase and epoxidase toward (5Z,8Z,11Z,14Z,17Z)-eicosapentaenoc acid (EPA). Catalyzes the epoxidation of the last double bond of EPA with no preferred stereoselectivity, producing both (R,S) and (S,R) stereoisomers. Can also catalyze the omega-1 and omega-2 oxidation of fatty acids with lower efficiency. In Mus musculus (Mouse), this protein is Cytochrome P450 4A12B.